Consider the following 192-residue polypeptide: Glycerol-3-phosphate acyltransferase (192 aa).

5 consecutive transmembrane segments (helical) span residues 1 to 21 (MTSA…GVLL), 51 to 71 (LGAV…VLAV), 78 to 98 (PTVH…PVWL), 112 to 132 (VLLV…VAVF), and 155 to 175 (LTAR…LMLW).

It belongs to the PlsY family. As to quaternary structure, probably interacts with PlsX.

It is found in the cell inner membrane. The enzyme catalyses an acyl phosphate + sn-glycerol 3-phosphate = a 1-acyl-sn-glycero-3-phosphate + phosphate. The protein operates within lipid metabolism; phospholipid metabolism. Catalyzes the transfer of an acyl group from acyl-phosphate (acyl-PO(4)) to glycerol-3-phosphate (G3P) to form lysophosphatidic acid (LPA). This enzyme utilizes acyl-phosphate as fatty acyl donor, but not acyl-CoA or acyl-ACP. This chain is Glycerol-3-phosphate acyltransferase, found in Myxococcus xanthus (strain DK1622).